We begin with the raw amino-acid sequence, 290 residues long: Nitrogenase iron protein 1 (290 aa).

Gly-10 to Ser-17 contacts ATP. Cys-98 provides a ligand contact to [4Fe-4S] cluster. Arg-101 carries the ADP-ribosylarginine; by dinitrogenase reductase ADP-ribosyltransferase modification. Residue Cys-133 coordinates [4Fe-4S] cluster.

The protein belongs to the NifH/BchL/ChlL family. In terms of assembly, homodimer. The cofactor is [4Fe-4S] cluster. Post-translationally, the reversible ADP-ribosylation of Arg-101 inactivates the nitrogenase reductase and regulates nitrogenase activity.

The catalysed reaction is N2 + 8 reduced [2Fe-2S]-[ferredoxin] + 16 ATP + 16 H2O = H2 + 8 oxidized [2Fe-2S]-[ferredoxin] + 2 NH4(+) + 16 ADP + 16 phosphate + 6 H(+). With respect to regulation, nitrogenase holoenzyme is subject to 'conformational protection' by FeSII; under oxidizing conditions FeSII binds to the holoenzyme and reversibly protects it from oxidation. The key enzymatic reactions in nitrogen fixation are catalyzed by the nitrogenase complex, which has 2 components: the iron protein (component 2) and a component 1 which is either a molybdenum-iron protein, a vanadium-iron, or an iron-iron protein. The sequence is that of Nitrogenase iron protein 1 (nifH1) from Azotobacter vinelandii.